The sequence spans 379 residues: Probable protein arginine N-methyltransferase 6.1 (379 aa).

The tract at residues 1–35 is disordered; the sequence is MLPSHLNGHSPLARRRPRLSAASPPATGDSDAAAA. Positions 19–35 are enriched in low complexity; that stretch reads LSAASPPATGDSDAAAA. Residues 45–379 form the SAM-dependent MTase PRMT-type domain; it reads DRIYFQSYSH…FLNIQLDCTM (335 aa). S-adenosyl-L-methionine contacts are provided by His-58, Arg-67, Gly-91, Glu-113, and Glu-142. Active-site residues include Glu-156 and Glu-165.

It belongs to the class I-like SAM-binding methyltransferase superfamily. Protein arginine N-methyltransferase family. PRMT6 subfamily.

In terms of biological role, arginine methyltransferase that can both catalyze the formation of omega-N monomethylarginine (MMA) and asymmetrical dimethylarginine (aDMA). The polypeptide is Probable protein arginine N-methyltransferase 6.1 (PRMT6.1) (Oryza sativa subsp. indica (Rice)).